We begin with the raw amino-acid sequence, 157 residues long: Ribosomal RNA large subunit methyltransferase H (157 aa).

S-adenosyl-L-methionine contacts are provided by residues Leu-73, Gly-104, and 123–128; that span reads LGPLTL.

The protein belongs to the RNA methyltransferase RlmH family. As to quaternary structure, homodimer.

It is found in the cytoplasm. The enzyme catalyses pseudouridine(1915) in 23S rRNA + S-adenosyl-L-methionine = N(3)-methylpseudouridine(1915) in 23S rRNA + S-adenosyl-L-homocysteine + H(+). Specifically methylates the pseudouridine at position 1915 (m3Psi1915) in 23S rRNA. The protein is Ribosomal RNA large subunit methyltransferase H of Xylella fastidiosa (strain M23).